The primary structure comprises 562 residues: Apical membrane antigen 1 (562 aa).

The signal sequence occupies residues Met-1 to Cys-21. Residues Glu-22–Gln-484 lie on the Extracellular side of the membrane. 2 N-linked (GlcNAc...) asparagine glycosylation sites follow: Asn-84 and Asn-176. Disulfide bonds link Cys-94-Cys-247, Cys-162-Cys-192, Cys-208-Cys-220, Cys-265-Cys-363, Cys-282-Cys-354, Cys-388-Cys-444, Cys-432-Cys-449, and Cys-434-Cys-451. Residue Asn-226 is glycosylated (N-linked (GlcNAc...) asparagine). N-linked (GlcNAc...) asparagine glycosylation is found at Asn-405 and Asn-441. Residues Met-485 to Phe-507 traverse the membrane as a helical segment. At Arg-508 to Tyr-562 the chain is on the cytoplasmic side. The interval Met-519–Trp-543 is disordered.

This sequence belongs to the apicomplexan parasites AMA1 family.

Its subcellular location is the membrane. In terms of biological role, involved in parasite invasion of erythrocytes. The protein is Apical membrane antigen 1 (AMA-1) of Plasmodium fragile.